Here is a 148-residue protein sequence, read N- to C-terminus: Large ribosomal subunit protein bL9 (148 aa).

This sequence belongs to the bacterial ribosomal protein bL9 family.

In terms of biological role, binds to the 23S rRNA. This Hydrogenobaculum sp. (strain Y04AAS1) protein is Large ribosomal subunit protein bL9.